A 469-amino-acid chain; its full sequence is MTAQTLYDKLWNSHVVREEEDGTVLLYIDRHLVHEVTSPQAFEGLKMAGRKLWRIDSVVSTADHNTPTGDWDKGIQDPISKLQVDTLDKNIKEFGALAYFPFMDKGQGIVHVMGPEQGATLPGMTVVCGDSHTSTHGAFGALAHGIGTSEVEHTMATQCITAKKSKSMLISVDGKLKAGVTAKDVALYIIGQIGTAGGTGYAIEFGGEAIRSLSMESRMTLCNMAIEAGARSGMVAVDQTTIDYVKDKPFAPEGEAWDKAVEYWRTLVSDEGAVFDKEYRFNAEDIEPQVTWGTSPEMVLDISSKVPNPAEETDPVKRSGMERALEYMGLEAGTPLNEIPVDIVFIGSCTNSRIEDLREAAAIAKDRKKAANVQRVLIVPGSGLVKEQAEKEGLDKIFIEAGFEWREPGCSMCLAMNADRLTPGQRCASTSNRNFEGRQGNGGRTHLVSPAMAAAAAVTGRFTDIRMMA.

[4Fe-4S] cluster contacts are provided by cysteine 349, cysteine 410, and cysteine 413.

It belongs to the aconitase/IPM isomerase family. LeuC type 1 subfamily. Heterodimer of LeuC and LeuD. Requires [4Fe-4S] cluster as cofactor.

The catalysed reaction is (2R,3S)-3-isopropylmalate = (2S)-2-isopropylmalate. The protein operates within amino-acid biosynthesis; L-leucine biosynthesis; L-leucine from 3-methyl-2-oxobutanoate: step 2/4. In terms of biological role, catalyzes the isomerization between 2-isopropylmalate and 3-isopropylmalate, via the formation of 2-isopropylmaleate. The sequence is that of 3-isopropylmalate dehydratase large subunit from Neisseria meningitidis serogroup B (strain ATCC BAA-335 / MC58).